A 506-amino-acid polypeptide reads, in one-letter code: MTQAVMLQGTASDVGKSVLAAGLCRIFYQDGLRTAPFKSQNMALNSGITSDGKEMGRAQIFQAEAAGITPDVRMNPVLLKPTSDRQAQVVLMGKVATNMDAVSYHDYKPRLREQILAVYNSLAQEYDVIVLEGAGSPAEINLRDRDIVNMGMAEMAQCPVILVADIDRGGVFAAIYGTLALLHKQERDRVKGVIINKFRGDVALLYSGIEQIESLTGVPVLGVMPWLDVDLEDEDGVALQNDKYRGNAPRDITIAIVQLPHISNFTDFNALAAQPDVRIRYIRRPEALTDADLVILPGSKNTLSDLAWLRESGMADALLQTHRQGVPVMGICGGYQMLGDTIVDEVESGLGTQPGLGLLNTITRFAQDKITTQVNATMSGELPSWLAAAAGLPVRGYEIHMGETVLQEGCCTAMTLQKNGCSVADGAVTADGLAFGTYLHGLFDSDAFTRAVVNGLRARKGLAPWETTFCYAEHKARQFDLLAEAMRQHIDIDKIYTIMQQHQEPV.

A GATase cobBQ-type domain is found at 251-448; sequence DITIAIVQLP…LHGLFDSDAF (198 aa). Cysteine 332 serves as the catalytic Nucleophile. Histidine 440 is a catalytic residue.

It belongs to the CobB/CobQ family. CobQ subfamily.

The protein operates within cofactor biosynthesis; adenosylcobalamin biosynthesis. In terms of biological role, catalyzes amidations at positions B, D, E, and G on adenosylcobyrinic A,C-diamide. NH(2) groups are provided by glutamine, and one molecule of ATP is hydrogenolyzed for each amidation. This Salmonella dublin (strain CT_02021853) protein is Cobyric acid synthase.